The chain runs to 407 residues: Tryptophan synthase beta chain (407 aa).

The segment covering 1-11 (MSTAPSQQHAS) has biased composition (polar residues). The interval 1–25 (MSTAPSQQHASAQVPDPRGRFGDFG) is disordered. Lys100 is modified (N6-(pyridoxal phosphate)lysine).

It belongs to the TrpB family. As to quaternary structure, tetramer of two alpha and two beta chains. Pyridoxal 5'-phosphate serves as cofactor.

It carries out the reaction (1S,2R)-1-C-(indol-3-yl)glycerol 3-phosphate + L-serine = D-glyceraldehyde 3-phosphate + L-tryptophan + H2O. It functions in the pathway amino-acid biosynthesis; L-tryptophan biosynthesis; L-tryptophan from chorismate: step 5/5. The beta subunit is responsible for the synthesis of L-tryptophan from indole and L-serine. This is Tryptophan synthase beta chain from Rhodopirellula baltica (strain DSM 10527 / NCIMB 13988 / SH1).